The sequence spans 147 residues: Protein archease (147 aa).

Ca(2+) contacts are provided by aspartate 17, aspartate 146, and isoleucine 147.

The protein belongs to the archease family.

In terms of biological role, activates the tRNA-splicing ligase complex by facilitating the enzymatic turnover of catalytic subunit RtcB. Acts by promoting the guanylylation of RtcB, a key intermediate step in tRNA ligation. Can also alter the NTP specificity of RtcB such that ATP, dGTP or ITP is used efficiently. The polypeptide is Protein archease (Pyrobaculum calidifontis (strain DSM 21063 / JCM 11548 / VA1)).